Here is a 214-residue protein sequence, read N- to C-terminus: ATP-dependent Clp protease proteolytic subunit 2 (214 aa).

The active-site Nucleophile is the serine 110. Histidine 135 is an active-site residue.

It belongs to the peptidase S14 family. Fourteen ClpP subunits assemble into 2 heptameric rings which stack back to back to give a disk-like structure with a central cavity, resembling the structure of eukaryotic proteasomes.

Its subcellular location is the cytoplasm. It carries out the reaction Hydrolysis of proteins to small peptides in the presence of ATP and magnesium. alpha-casein is the usual test substrate. In the absence of ATP, only oligopeptides shorter than five residues are hydrolyzed (such as succinyl-Leu-Tyr-|-NHMec, and Leu-Tyr-Leu-|-Tyr-Trp, in which cleavage of the -Tyr-|-Leu- and -Tyr-|-Trp bonds also occurs).. Cleaves peptides in various proteins in a process that requires ATP hydrolysis. Has a chymotrypsin-like activity. Plays a major role in the degradation of misfolded proteins. In Mycobacterium leprae (strain TN), this protein is ATP-dependent Clp protease proteolytic subunit 2.